The following is a 384-amino-acid chain: GTPase Obg (384 aa).

The region spanning 1–159 (MKFVDEVEIR…RPLKLELMLL (159 aa)) is the Obg domain. The disordered stretch occupies residues 72–94 (NGMGKNCTGRRGNDIVLPVPPGT). The region spanning 160 to 333 (ADVGLLGMPN…LCREVMSYLE (174 aa)) is the OBG-type G domain. Residues 166 to 173 (GMPNAGKS), 191 to 195 (FTTLI), 213 to 216 (DIPG), 283 to 286 (NKVD), and 314 to 316 (AAL) each bind GTP. Positions 173 and 193 each coordinate Mg(2+). The segment at 358–384 (EEVLEEEMDDEDDDDDDDHDVEVIYQK) is disordered. Acidic residues predominate over residues 360–377 (VLEEEMDDEDDDDDDDHD).

This sequence belongs to the TRAFAC class OBG-HflX-like GTPase superfamily. OBG GTPase family. In terms of assembly, monomer. It depends on Mg(2+) as a cofactor.

It localises to the cytoplasm. In terms of biological role, an essential GTPase which binds GTP, GDP and possibly (p)ppGpp with moderate affinity, with high nucleotide exchange rates and a fairly low GTP hydrolysis rate. Plays a role in control of the cell cycle, stress response, ribosome biogenesis and in those bacteria that undergo differentiation, in morphogenesis control. This Idiomarina loihiensis (strain ATCC BAA-735 / DSM 15497 / L2-TR) protein is GTPase Obg.